The following is a 926-amino-acid chain: OTU domain-containing protein 7A (926 aa).

Residues 75–99 are disordered; that stretch reads PHVFNEGRGPKQPEREPQPGHKVER. Over residues 82–99 the composition is skewed to basic and acidic residues; it reads RGPKQPEREPQPGHKVER. A Phosphoserine modification is found at S119. A TRAF-binding region spans residues 168–410; it reads ERDLIEQATM…AVDPGKDWEW (243 aa). Residues 183 to 449 form a catalytic region; it reads AGRLNWWSTV…VTWIRIPSET (267 aa). In terms of domain architecture, OTU spans 199-374; sequence LLPLATTGDG…QAHFSALVSM (176 aa). Residue D207 is part of the active site. The active-site Nucleophile is the C210. H367 acts as the Proton acceptor in catalysis. 3 disordered regions span residues 452–514, 537–613, and 668–768; these read PLAQ…DSVA, GLVH…DAWK, and EQEQ…APAR. Positions 481 to 491 are enriched in low complexity; sequence VCSNSNSNNGK. Residues 492 to 510 are compositionally biased toward basic and acidic residues; the sequence is NGKDKEKEKQRKEKDKTRA. The Nuclear localization signal motif lies at 494–509; that stretch reads KDKEKEKQRKEKDKTR. 3 stretches are compositionally biased toward low complexity: residues 576–592, 677–691, and 729–742; these read GASA…PSPT, ATAA…AATA, and PAAG…AGGT. R880 bears the Omega-N-methylarginine mark. An A20-type zinc finger spans residues 884-919; it reads GPVQRRCQRENCAFYGRAETEHYCSYCYREELRRRR. Zn(2+)-binding residues include C890, C895, C907, and C910.

This sequence belongs to the peptidase C64 family.

The protein resides in the cytoplasm. Its subcellular location is the nucleus. It carries out the reaction Thiol-dependent hydrolysis of ester, thioester, amide, peptide and isopeptide bonds formed by the C-terminal Gly of ubiquitin (a 76-residue protein attached to proteins as an intracellular targeting signal).. Deubiquitinase, which cleaves 'Lys-11'-linked polyubiquitin chains. Might be required for PA28-20S proteasome assembly. This chain is OTU domain-containing protein 7A (OTUD7A), found in Homo sapiens (Human).